A 323-amino-acid chain; its full sequence is Fructose-1,6-bisphosphatase class 1 (323 aa).

Mg(2+) contacts are provided by Glu93, Asp114, Leu116, and Asp117. Residues Asp117–Ser120, Asn205, Tyr233, and Lys263 each bind substrate. Glu269 contacts Mg(2+).

Belongs to the FBPase class 1 family. As to quaternary structure, homotetramer. It depends on Mg(2+) as a cofactor.

It localises to the cytoplasm. It catalyses the reaction beta-D-fructose 1,6-bisphosphate + H2O = beta-D-fructose 6-phosphate + phosphate. Its pathway is carbohydrate biosynthesis; gluconeogenesis. The chain is Fructose-1,6-bisphosphatase class 1 from Sulfurihydrogenibium sp. (strain YO3AOP1).